Consider the following 242-residue polypeptide: Small ribosomal subunit protein uS2 (242 aa).

Belongs to the universal ribosomal protein uS2 family.

In Pseudoalteromonas translucida (strain TAC 125), this protein is Small ribosomal subunit protein uS2.